The primary structure comprises 66 residues: U10-theraphotoxin-Cg1a 2 (66 aa).

The signal sequence occupies residues 1–21; that stretch reads MKTSVLFVIFGLALLLCLSFA. Positions 22-29 are excised as a propeptide; sequence AELEDTGR. Intrachain disulfides connect cysteine 31-cysteine 46, cysteine 38-cysteine 51, and cysteine 45-cysteine 58.

Belongs to the neurotoxin 10 (Hwtx-1) family. 29 (Jztx-13) subfamily. As to expression, expressed by the venom gland.

The protein localises to the secreted. In terms of biological role, probable ion channel inhibitor. This chain is U10-theraphotoxin-Cg1a 2, found in Chilobrachys guangxiensis (Chinese earth tiger tarantula).